The sequence spans 308 residues: Glycine-rich protein GRP33 (308 aa).

Positions 83 to 118 (DQFPKYNFLGKLLGPGGSTMKQLQDETMTKISILGR) constitute a KH domain. Composition is skewed to gly residues over residues 203 to 220 (GPMG…GGFS) and 273 to 294 (RGAG…GGGK). 2 disordered regions span residues 203–222 (GPMG…FSGP) and 270–308 (SPGR…AAPY).

In terms of processing, the arginines in the Gly-rich domain might be methylated.

The sequence is that of Glycine-rich protein GRP33 from Artemia salina (Brine shrimp).